Reading from the N-terminus, the 180-residue chain is tRNA (cytidine(56)-2'-O)-methyltransferase (180 aa).

S-adenosyl-L-methionine-binding positions include L84 and 112–116 (GAEKV).

It belongs to the aTrm56 family. In terms of assembly, homodimer.

The protein resides in the cytoplasm. The catalysed reaction is cytidine(56) in tRNA + S-adenosyl-L-methionine = 2'-O-methylcytidine(56) in tRNA + S-adenosyl-L-homocysteine + H(+). Functionally, specifically catalyzes the AdoMet-dependent 2'-O-ribose methylation of cytidine at position 56 in tRNAs. In Haloarcula marismortui (strain ATCC 43049 / DSM 3752 / JCM 8966 / VKM B-1809) (Halobacterium marismortui), this protein is tRNA (cytidine(56)-2'-O)-methyltransferase.